A 464-amino-acid chain; its full sequence is MLTTDSDPIVAIATAPGRGGIGVVRISFGRAGEAAAQPLMQALTGQTLAARRASYVPFLDASGDALDRGIALYFPAPHSYTGEHVLELQGHGGPVVLQLVLQRCIDAGRAFGLRLAEPGEFTRRAFLNDKLDLAQAEAVADLIEASTEAAARSAGRSLDGAFSRDIHALVEDVITLRMLVEATLDFPEEEIDFLEAADARGKLARIRERLGHVLSEARQGALLREGLSVVLAGQPNVGKSSLLNALAGAELAIVTPIAGTTRDKVAQTIQIEGIPLHVIDTAGLRDTEDEVEKIGIARTWNEIERADVVLHLLDARTGMTVEDEAIAGRFPAGVPVVRVLNKTDLTGLAPATRALDADLDLSEVRLSAKQGDGVALLREELLRIAGWQAGAESVYLARERHLIALRAAEEHLATAAAHADQNSQALDLFAEELRLAQDQLNSITGEFSSDDLLGVIFSRFCIGK.

(6S)-5-formyl-5,6,7,8-tetrahydrofolate contacts are provided by arginine 25, glutamate 87, and lysine 130. Residues 226–386 (GLSVVLAGQP…LREELLRIAG (161 aa)) form the TrmE-type G domain. Asparagine 236 contributes to the K(+) binding site. GTP is bound by residues 236–241 (NVGKSS), 255–261 (TPIAGTT), and 280–283 (DTAG). Serine 240 lines the Mg(2+) pocket. K(+)-binding residues include threonine 255, isoleucine 257, and threonine 260. Threonine 261 is a binding site for Mg(2+). Lysine 464 provides a ligand contact to (6S)-5-formyl-5,6,7,8-tetrahydrofolate.

It belongs to the TRAFAC class TrmE-Era-EngA-EngB-Septin-like GTPase superfamily. TrmE GTPase family. In terms of assembly, homodimer. Heterotetramer of two MnmE and two MnmG subunits. It depends on K(+) as a cofactor.

The protein localises to the cytoplasm. Functionally, exhibits a very high intrinsic GTPase hydrolysis rate. Involved in the addition of a carboxymethylaminomethyl (cmnm) group at the wobble position (U34) of certain tRNAs, forming tRNA-cmnm(5)s(2)U34. This chain is tRNA modification GTPase MnmE, found in Paraburkholderia xenovorans (strain LB400).